Here is a 688-residue protein sequence, read N- to C-terminus: Elongation factor G (688 aa).

One can recognise a tr-type G domain in the interval 8 to 282 (DKFRNFGIMA…GVVDYLPSPL (275 aa)). GTP is bound by residues 17–24 (AHIDAGKT), 81–85 (DTPGH), and 135–138 (NKMD).

Belongs to the TRAFAC class translation factor GTPase superfamily. Classic translation factor GTPase family. EF-G/EF-2 subfamily.

Its subcellular location is the cytoplasm. Its function is as follows. Catalyzes the GTP-dependent ribosomal translocation step during translation elongation. During this step, the ribosome changes from the pre-translocational (PRE) to the post-translocational (POST) state as the newly formed A-site-bound peptidyl-tRNA and P-site-bound deacylated tRNA move to the P and E sites, respectively. Catalyzes the coordinated movement of the two tRNA molecules, the mRNA and conformational changes in the ribosome. The protein is Elongation factor G of Clostridium beijerinckii (strain ATCC 51743 / NCIMB 8052) (Clostridium acetobutylicum).